A 159-amino-acid polypeptide reads, in one-letter code: MSTKAIYPGTFDPITNGHIDIVTRAASMFDKVVLAIAASPSKKPMFTLDERIALATQATAHLVNVEVIGFSDLMASFARAQQANILIRGLRAVADFEYEMQLAHMNRHLMPTLESVFLMPCKEWSFISSSLVKEVARHQGDVSHFLPANVHQALLNKLK.

Thr10 is a binding site for substrate. Residues 10–11 and His18 contribute to the ATP site; that span reads TF. The substrate site is built by Lys42, Met74, and Arg88. ATP is bound by residues 89–91, Glu99, and 124–130; these read GLR and WSFISSS.

The protein belongs to the bacterial CoaD family. As to quaternary structure, homohexamer. Requires Mg(2+) as cofactor.

It is found in the cytoplasm. The enzyme catalyses (R)-4'-phosphopantetheine + ATP + H(+) = 3'-dephospho-CoA + diphosphate. It functions in the pathway cofactor biosynthesis; coenzyme A biosynthesis; CoA from (R)-pantothenate: step 4/5. Its function is as follows. Reversibly transfers an adenylyl group from ATP to 4'-phosphopantetheine, yielding dephospho-CoA (dPCoA) and pyrophosphate. The polypeptide is Phosphopantetheine adenylyltransferase (Klebsiella pneumoniae (strain 342)).